A 136-amino-acid chain; its full sequence is Nucleoside diphosphate kinase (136 aa).

Positions 10, 58, 86, 92, 104, and 114 each coordinate ATP. The active-site Pros-phosphohistidine intermediate is His117.

The protein belongs to the NDK family. As to quaternary structure, homotetramer. Requires Mg(2+) as cofactor.

It is found in the cytoplasm. The catalysed reaction is a 2'-deoxyribonucleoside 5'-diphosphate + ATP = a 2'-deoxyribonucleoside 5'-triphosphate + ADP. The enzyme catalyses a ribonucleoside 5'-diphosphate + ATP = a ribonucleoside 5'-triphosphate + ADP. Its function is as follows. Major role in the synthesis of nucleoside triphosphates other than ATP. The ATP gamma phosphate is transferred to the NDP beta phosphate via a ping-pong mechanism, using a phosphorylated active-site intermediate. In Mycobacterium avium (strain 104), this protein is Nucleoside diphosphate kinase.